The chain runs to 487 residues: UDP-N-acetylmuramate--L-alanine ligase (487 aa).

129-135 (GTHGKTT) lines the ATP pocket.

Belongs to the MurCDEF family.

Its subcellular location is the cytoplasm. It catalyses the reaction UDP-N-acetyl-alpha-D-muramate + L-alanine + ATP = UDP-N-acetyl-alpha-D-muramoyl-L-alanine + ADP + phosphate + H(+). The protein operates within cell wall biogenesis; peptidoglycan biosynthesis. Its function is as follows. Cell wall formation. In Aliivibrio salmonicida (strain LFI1238) (Vibrio salmonicida (strain LFI1238)), this protein is UDP-N-acetylmuramate--L-alanine ligase.